We begin with the raw amino-acid sequence, 47 residues long: Large ribosomal subunit protein uL14c (47 aa).

It belongs to the universal ribosomal protein uL14 family. As to quaternary structure, part of the 50S ribosomal subunit.

Its subcellular location is the plastid. The protein localises to the chloroplast. Its function is as follows. Binds to 23S rRNA. In Vigna unguiculata (Cowpea), this protein is Large ribosomal subunit protein uL14c (rpl14).